Reading from the N-terminus, the 62-residue chain is Large ribosomal subunit protein bL28 (62 aa).

Belongs to the bacterial ribosomal protein bL28 family.

The protein is Large ribosomal subunit protein bL28 of Streptococcus thermophilus (strain CNRZ 1066).